Here is a 298-residue protein sequence, read N- to C-terminus: MNNLQTKFPHIAIKLNEPLSKYTYTKTGGAADVFVMPKTIEEAQEVVAYCHQNKIPLTILGNGSNLIIKDGGIRGVILHLDLLQTIERNNTQIVAMSGAKLIDTAKFALNESLSGLEFACGIPGSIGGALHMNAGAYGGEISDVLEAATVLTQTGELKKLKRSELKAAYRFSTIAEKNYIVLDATFSLALEEKNLIQAKMDELTAAREAKQPLEYPSCGSVFKRPPGHFAGKLIQDSGLQGHIIGGAQVSLKHAGFIVNIGGATATDYMNLIAYVQQTVREKFDVELETEVKIIGEDK.

The FAD-binding PCMH-type domain occupies 26-191; it reads KTGGAADVFV…LDATFSLALE (166 aa). Residue arginine 170 is part of the active site. Serine 220 functions as the Proton donor in the catalytic mechanism. Glutamate 290 is a catalytic residue.

Belongs to the MurB family. FAD serves as cofactor.

Its subcellular location is the cytoplasm. It carries out the reaction UDP-N-acetyl-alpha-D-muramate + NADP(+) = UDP-N-acetyl-3-O-(1-carboxyvinyl)-alpha-D-glucosamine + NADPH + H(+). The protein operates within cell wall biogenesis; peptidoglycan biosynthesis. In terms of biological role, cell wall formation. This chain is UDP-N-acetylenolpyruvoylglucosamine reductase, found in Listeria monocytogenes serovar 1/2a (strain ATCC BAA-679 / EGD-e).